A 235-amino-acid chain; its full sequence is Large ribosomal subunit protein uL1 (235 aa).

This sequence belongs to the universal ribosomal protein uL1 family. Part of the 50S ribosomal subunit.

Functionally, binds directly to 23S rRNA. The L1 stalk is quite mobile in the ribosome, and is involved in E site tRNA release. In terms of biological role, protein L1 is also a translational repressor protein, it controls the translation of the L11 operon by binding to its mRNA. The polypeptide is Large ribosomal subunit protein uL1 (Paenarthrobacter aurescens (strain TC1)).